Consider the following 510-residue polypeptide: MNKELVLVVDFGGQYNQLIARRVRENRVYCEIVPYTTSIEDIKEKAPKGIIFTGGPNSVYGENAPRVQKELFDLGIPVLGICYGDQLMAHSLEGEVTSPEKREYGKTDVNLDNSSLLFKDMKEKDQCWMSHTDYISKVPKGFKIIATTDECPCAAMENAEKKLYGVQFHPEVEHTLFGKKMLKNFLFNVCNLKGDWSMSSFAEQQIKAIKEKVGDKKVICALSGGVDSSVAAVIVHKAIGKQLTCVFVDHGLLRKDEGDQVERIFKDQFDMNLIRVNAQDRFLGKLKGVSDPERKRKIIGEEFIRVFEEEAKKLGDISFLVQGTIYPDIVESGTNTSATIKSHHNVGGLPEDMEFKLIEPLRELFKDEVRAVGEELGIPHKLVWRQPFPGPGLAIRVLGEVTEEKLAITREADAIFREEIAKAGLEEKIWQYFACLPNIQSVGVMGDERTYCHTIALRAVTSSDAMTSDWARIPYEVLDKVSRRIVNEVKEVNRIVYDVTSKPPATIEWE.

Positions 5–195 (LVLVVDFGGQ…LFNVCNLKGD (191 aa)) constitute a Glutamine amidotransferase type-1 domain. Residue C82 is the Nucleophile of the active site. Catalysis depends on residues H169 and E171. One can recognise a GMPS ATP-PPase domain in the interval 196-385 (WSMSSFAEQQ…LGIPHKLVWR (190 aa)). Residue 223 to 229 (SGGVDSS) participates in ATP binding.

As to quaternary structure, homodimer.

It catalyses the reaction XMP + L-glutamine + ATP + H2O = GMP + L-glutamate + AMP + diphosphate + 2 H(+). The protein operates within purine metabolism; GMP biosynthesis; GMP from XMP (L-Gln route): step 1/1. In terms of biological role, catalyzes the synthesis of GMP from XMP. This chain is GMP synthase [glutamine-hydrolyzing], found in Clostridium botulinum (strain ATCC 19397 / Type A).